The sequence spans 1162 residues: Leptin receptor (1162 aa).

The N-terminal stretch at 1–21 (MTCQKFYVVLLHWEFLYVITA) is a signal peptide. The Extracellular portion of the chain corresponds to 22 to 839 (LNLAYPTSPW…DIAKQQNDAG (818 aa)). 5 disulfides stabilise this stretch: Cys37-Cys90, Cys89-Cys99, Cys131-Cys142, Cys186-Cys195, and Cys188-Cys193. Residues Asn55, Asn56, Asn73, and Asn98 are each glycosylated (N-linked (GlcNAc...) asparagine). Asn187 carries an N-linked (GlcNAc...) asparagine glycan. Residues 238 to 331 (PPLGLRMEVT…LPQLFTTQDV (94 aa)) enclose the Fibronectin type-III 1 domain. N-linked (GlcNAc...) asparagine glycans are attached at residues Asn275, Asn345, and Asn356. 2 disulfide bridges follow: Cys350–Cys410 and Cys411–Cys416. N-linked (GlcNAc...) asparagine glycosylation is present at Asn431. Disulfide bonds link Cys434–Cys445, Cys471–Cys526, and Cys486–Cys496. A leptin-binding region spans residues 465–482 (HRRSLYCPDNPSIRPTSE). N-linked (GlcNAc...) asparagine glycosylation is found at Asn514, Asn622, Asn657, Asn668, Asn686, Asn695, Asn698, and Asn726. Fibronectin type-III domains lie at 537-632 (PPSN…TLVM), 637-729 (PMRG…NLTF), and 738-831 (AVQS…KDDI). Positions 620–624 (WSNWS) match the WSXWS motif motif. The chain crosses the membrane as a helical span at residues 840–860 (LYVIVPIIISSCVLLLGTLLI). Residues 861–1162 (SHQRMKKLFW…IENKMCDLTV (302 aa)) are Cytoplasmic-facing. The Box 1 motif signature appears at 869–877 (FWDDVPNPK). Ser880 bears the Phosphoserine mark. The interval 891 to 896 (ETFEHL) is required for JAK2 activation. Residues 896–904 (LFTKHAESV) form a required for STAT3 phosphorylation region. At Tyr985 the chain carries Phosphotyrosine; by JAK2. Phosphotyrosine is present on Tyr1077. Tyr1138 carries the phosphotyrosine; by JAK2 modification.

This sequence belongs to the type I cytokine receptor family. Type 2 subfamily. Present as a mixture of monomers and dimers. The phosphorylated receptor binds a number of SH2 domain-containing proteins such as JAK2, STAT3, PTPN11, and SOCS3. Interaction with SOCS3 inhibits JAK/STAT signaling and MAPK cascade. On ligand binding, phosphorylated on two conserved C-terminal tyrosine residues (isoform B only) by JAK2. Tyr-985 is required for complete binding and activation of PTPN11, ERK/FOS activation,for interaction with SOCS3 and SOCS3 mediated inhibition of leptin signaling. Phosphorylation on Tyr-1138 is required for STAT3 binding/activation. Phosphorylation of Tyr-1077 has a more accessory role. Isoform B is expressed in kidney, liver, lung, ovary, spleen and uterus. Increased level in uterus during gestation. Isoform A and isoform C are predominantly expressed in cerebral microvessels and choroid plexus, with lower levels in cortex, cerebellum and hypothalamus but also liver and lung. Isoform F is expressed at high levels in brain, liver and spleen and less in stomach, kidney, thymus, heart, lung and hypothalamus.

The protein localises to the cell membrane. The protein resides in the basolateral cell membrane. It is found in the secreted. Its function is as follows. Receptor for hormone LEP/leptin. On ligand binding, mediates LEP central and peripheral effects through the activation of different signaling pathways such as JAK2/STAT3 and MAPK cascade/FOS. In the hypothalamus, LEP acts as an appetite-regulating factor that induces a decrease in food intake and an increase in energy consumption by inducing anorexinogenic factors and suppressing orexigenic neuropeptides, also regulates bone mass and secretion of hypothalamo-pituitary-adrenal hormones. In the periphery, increases basal metabolism, influences reproductive function, regulates pancreatic beta-cell function and insulin secretion, is pro-angiogenic and affects innate and adaptive immunity. Control of energy homeostasis and melanocortin production (stimulation of POMC and full repression of AgRP transcription) is mediated by STAT3 signaling, whereas distinct signals regulate NPY and the control of fertility, growth and glucose homeostasis. Involved in the regulation of counter-regulatory response to hypoglycemia by inhibiting neurons of the parabrachial nucleus. Has a specific effect on T lymphocyte responses, differentially regulating the proliferation of naive and memory T-cells. Leptin increases Th1 and suppresses Th2 cytokine production. May transport LEP across the blood-brain barrier. Binds LEP and mediates LEP endocytosis. Does not induce phosphorylation of and activate STAT3. In terms of biological role, antagonizes Isoform A and isoform B-mediated LEP binding and endocytosis. The protein is Leptin receptor (Lepr) of Rattus norvegicus (Rat).